The primary structure comprises 113 residues: Iron-sulfur cluster insertion protein ErpA (113 aa).

Residues Cys-41, Cys-105, and Cys-107 each contribute to the iron-sulfur cluster site.

This sequence belongs to the HesB/IscA family. As to quaternary structure, homodimer. Requires iron-sulfur cluster as cofactor.

In terms of biological role, required for insertion of 4Fe-4S clusters for at least IspG. This Aliivibrio salmonicida (strain LFI1238) (Vibrio salmonicida (strain LFI1238)) protein is Iron-sulfur cluster insertion protein ErpA.